The sequence spans 715 residues: Polyphosphate kinase (715 aa).

Asn-60 contributes to the ATP binding site. Mg(2+) is bound by residues Arg-380 and Arg-410. His-440 functions as the Phosphohistidine intermediate in the catalytic mechanism. ATP is bound by residues Tyr-473, Arg-569, and His-597.

The protein belongs to the polyphosphate kinase 1 (PPK1) family. Mg(2+) serves as cofactor. Post-translationally, an intermediate of this reaction is the autophosphorylated ppk in which a phosphate is covalently linked to a histidine residue through a N-P bond.

The enzyme catalyses [phosphate](n) + ATP = [phosphate](n+1) + ADP. Its function is as follows. Catalyzes the reversible transfer of the terminal phosphate of ATP to form a long-chain polyphosphate (polyP). The protein is Polyphosphate kinase of Erythrobacter litoralis (strain HTCC2594).